The sequence spans 995 residues: DExH-box ATP-dependent RNA helicase DExH1 (995 aa).

2 disordered regions span residues 1 to 42 (MPPH…EQRW) and 156 to 192 (KTTQ…ASKL). The span at 25-37 (RGGGGRGGGGGGR) shows a compositional bias: gly residues. Over residues 161 to 170 (SGSSGASASA) the composition is skewed to low complexity. The segment covering 171–181 (FNDQQDRTSTL) has biased composition (polar residues). The region spanning 238 to 405 (LNSVSQNQVL…FGNSPTMHIP (168 aa)) is the Helicase ATP-binding domain. 251–258 (GETGCGKT) is an ATP binding site. Positions 352–355 (DEIH) match the DEIH box motif. The tract at residues 429-450 (SSDSGNYQGSSRGRRRESESKK) is disordered. The 180-residue stretch at 484 to 663 (QIDVDLVEAT…ELCLHIKSLQ (180 aa)) folds into the Helicase C-terminal domain.

Belongs to the DExH box helicase family.

It catalyses the reaction ATP + H2O = ADP + phosphate + H(+). This chain is DExH-box ATP-dependent RNA helicase DExH1, found in Arabidopsis thaliana (Mouse-ear cress).